The following is a 269-amino-acid chain: Protein OPG079 (269 aa).

It belongs to the orthopoxvirus OPG079 family. As to quaternary structure, homoomultimer (Potential). Interacts with the small subunit of ribonucleotide reductase. Interacts with host FAM111A; this interaction protomtes OPG079 degradation through autophagy.

It is found in the host cytoplasm. In terms of biological role, plays an essential role in viral DNA replication. Binds to ssDNA with high affinity and localizes to cytoplasmic factories where nascent viral genomes accumulate. May disrupt loops, hairpins and other secondary structures present on ssDNA to reduce and eliminate pausing of viral DNA polymerase at specific sites during elongation. This chain is Protein OPG079 (OPG079), found in Vaccinia virus (strain Copenhagen) (VACV).